Consider the following 687-residue polypeptide: DNA-directed RNA polymerase subunit beta' (687 aa).

Residues Cys69, Cys71, Cys87, and Cys90 each coordinate Zn(2+). Mg(2+) contacts are provided by Asp491, Asp493, and Asp495.

Belongs to the RNA polymerase beta' chain family. RpoC1 subfamily. As to quaternary structure, in plastids the minimal PEP RNA polymerase catalytic core is composed of four subunits: alpha, beta, beta', and beta''. When a (nuclear-encoded) sigma factor is associated with the core the holoenzyme is formed, which can initiate transcription. Mg(2+) serves as cofactor. Requires Zn(2+) as cofactor.

The protein resides in the plastid. It is found in the chloroplast. It catalyses the reaction RNA(n) + a ribonucleoside 5'-triphosphate = RNA(n+1) + diphosphate. Functionally, DNA-dependent RNA polymerase catalyzes the transcription of DNA into RNA using the four ribonucleoside triphosphates as substrates. In Glycine max (Soybean), this protein is DNA-directed RNA polymerase subunit beta'.